The chain runs to 239 residues: Aldehyde dehydrogenase, dimeric NADP-preferring (239 aa).

Cysteine 30 is a catalytic residue.

It belongs to the aldehyde dehydrogenase family. In terms of assembly, homodimer.

It localises to the cytoplasm. It carries out the reaction an aldehyde + NAD(+) + H2O = a carboxylate + NADH + 2 H(+). It catalyses the reaction octanal + NAD(+) + H2O = octanoate + NADH + 2 H(+). In terms of biological role, ALDHs play a major role in the detoxification of alcohol-derived acetaldehyde. They are involved in the metabolism of corticosteroids, biogenic amines, neurotransmitters, and lipid peroxidation. Oxidizes medium and long chain aldehydes into non-toxic fatty acids. Preferentially oxidizes aromatic aldehyde substrates. Comprises about 50 percent of corneal epithelial soluble proteins. May play a role in preventing corneal damage caused by ultraviolet light. This chain is Aldehyde dehydrogenase, dimeric NADP-preferring (ALDH3A1), found in Bos taurus (Bovine).